A 1202-amino-acid polypeptide reads, in one-letter code: Phospholipid-transporting ATPase 10 (1202 aa).

At 1–73 (MAGPSRRRRR…STKYTVASFF (73 aa)) the chain is on the cytoplasmic side. Residues 74–95 (PKSLFEQFRRVANFYFLVTGIL) form a helical membrane-spanning segment. The Extracellular portion of the chain corresponds to 96–99 (SLTD). The helical transmembrane segment at 100-122 (LSPYGAVSALLPLALVISATMVK) threads the bilayer. Residues 123–305 (EGIEDWRRKQ…SRIERTMDKI (183 aa)) lie on the Cytoplasmic side of the membrane. Residues 306–327 (IYLMFGLVFLMSFVGSIIFGVE) form a helical membrane-spanning segment. Residues 328-364 (TREDKVKNGRTERWYLKPDDADIFFDPERAPMAAIYH) lie on the Extracellular side of the membrane. The helical transmembrane segment at 365–382 (FFTATMLYSYFIPISLYV) threads the bilayer. Topologically, residues 383–920 (SIEIVKVLQS…HGHWCYSRIA (538 aa)) are cytoplasmic. D430 (4-aspartylphosphate intermediate) is an active-site residue. The Mg(2+) site is built by D865 and D869. A helical transmembrane segment spans residues 921–940 (SMICYFFYKNITFGVTVFLY). Over 941 to 954 (EAYTSFSGQPAYND) the chain is Extracellular. Residues 955-974 (WFLSLFNVFFSSLPVIALGV) form a helical membrane-spanning segment. Residues 975–1004 (FDQDVSARFCYKFPLLYQEGVQNILFSWKR) are Cytoplasmic-facing. Residues 1005–1027 (IIGWMFNGFISALAIFFLCKESL) form a helical membrane-spanning segment. Topologically, residues 1028 to 1040 (KHQLFDPDGKTAG) are extracellular. Residues 1041–1063 (REILGGTMYTCVVWVVNLQMALS) form a helical membrane-spanning segment. The Cytoplasmic segment spans residues 1064-1069 (ISYFTW). A helical membrane pass occupies residues 1070–1090 (VQHIVIWGSIAFWYIFLMIYG). Residues 1091-1107 (AMTPSFSTDAYMVFLEA) lie on the Extracellular side of the membrane. The chain crosses the membrane as a helical span at residues 1108–1132 (LAPAPSYWLTTLFVMIFALIPYFVY). At 1133-1202 (KSVQMRFFPK…DQIYKDLVGV (70 aa)) the chain is on the cytoplasmic side.

The protein belongs to the cation transport ATPase (P-type) (TC 3.A.3) family. Type IV subfamily.

The protein localises to the cell membrane. The enzyme catalyses ATP + H2O + phospholipidSide 1 = ADP + phosphate + phospholipidSide 2.. In terms of biological role, involved in transport of phospholipids. The polypeptide is Phospholipid-transporting ATPase 10 (Arabidopsis thaliana (Mouse-ear cress)).